The sequence spans 284 residues: Ribosomal RNA small subunit methyltransferase A (284 aa).

Residues H12, L14, G47, E68, D93, and N118 each contribute to the S-adenosyl-L-methionine site.

This sequence belongs to the class I-like SAM-binding methyltransferase superfamily. rRNA adenine N(6)-methyltransferase family. RsmA subfamily.

The protein localises to the cytoplasm. The catalysed reaction is adenosine(1518)/adenosine(1519) in 16S rRNA + 4 S-adenosyl-L-methionine = N(6)-dimethyladenosine(1518)/N(6)-dimethyladenosine(1519) in 16S rRNA + 4 S-adenosyl-L-homocysteine + 4 H(+). Specifically dimethylates two adjacent adenosines (A1518 and A1519) in the loop of a conserved hairpin near the 3'-end of 16S rRNA in the 30S particle. May play a critical role in biogenesis of 30S subunits. This chain is Ribosomal RNA small subunit methyltransferase A, found in Synechocystis sp. (strain ATCC 27184 / PCC 6803 / Kazusa).